The primary structure comprises 79 residues: Short neurotoxin 3 (79 aa).

The first 21 residues, methionine 1–threonine 21, serve as a signal peptide directing secretion. 4 disulfides stabilise this stretch: cysteine 24-cysteine 41, cysteine 34-cysteine 59, cysteine 63-cysteine 71, and cysteine 72-cysteine 77.

This sequence belongs to the three-finger toxin family. Short-chain subfamily. Type III alpha-neurotoxin sub-subfamily. In terms of tissue distribution, expressed by the venom gland.

It localises to the secreted. Its function is as follows. Binds with high affinity to muscle nicotinic acetylcholine receptor (nAChR) and hinders acetylcholine binding to the receptor, thereby impairing neuromuscular transmission. Competes with the binding of alpha-bungarotoxin on muscle AChR (from Torpedo) with an IC(50) of 0.30 uM. Causes muscle paralysis, spasms and increased respiration. The protein is Short neurotoxin 3 of Pseudonaja textilis (Eastern brown snake).